A 160-amino-acid chain; its full sequence is MKQVVLNIVIAFLWVLFQDEDEFKFTTFFAGFLIGLIVIYILHRFFGEEFYLKKIWVAIKFLAVYLYQLITSSISTINYILFKTNEVNPGLLTYETSLKSNWAITFLTILIIITPGSTVIRISKNTNKFFIHSIDVSEKDKENLLKSIKQYEDLILEVTR.

3 helical membrane passes run 23–43, 55–75, and 100–120; these read FKFTTFFAGFLIGLIVIYILH, IWVAIKFLAVYLYQLITSSIS, and SNWAITFLTILIIITPGSTVI.

It belongs to the CPA3 antiporters (TC 2.A.63) subunit E family. As to quaternary structure, may form a heterooligomeric complex that consists of seven subunits: mnhA2, mnhB2, mnhC2, mnhD2, mnhE2, mnhF2 and mnhG2.

It localises to the cell membrane. This chain is Putative antiporter subunit mnhE2 (mnhE2), found in Staphylococcus epidermidis (strain ATCC 35984 / DSM 28319 / BCRC 17069 / CCUG 31568 / BM 3577 / RP62A).